The primary structure comprises 1034 residues: MGKAENYEMYSVELGPGPGGDMAAKMSKKKAGKGGGKKKEKLENMKKEMEINDHQLSVAELEQKYQTSATKGLSASLAADLLLRDGPNALRPPRGTPEYVKFARQLAGGLQCLMWVAAAICLIAFAIQASEGDLTTDDNLYLALALIAVVVVTGCFGYYQEFKSTNIIASFKNLVPQQATVIRDGDKFQINADQLVVGDLVEMKGGDRVPADIRILQAQGCKVDNSSLTGESEPQTRSPECTHESPLETRNIALFSTMCLEGTAQGLVVNTGDRTIIGRIASLASGVENEKTPIAIEIEHFVDIIAGLAILFGATFFVVAMCIGYTFLRAMVFFMAIVVAYVPEGLLATVTVCLSLTAKRLASKNCVVKNLEAVETLGSKSVICSDKTGTLTQNSMTVSNLWFDNHIHTADTTEDQSGQKFDQSSETWRALCRVLTLCNRAAFKSGQDAVPVPKRIVIGDASETALLKFSELTLGNAMGYRERFPKVCEIPFNSTNKFQLSIHTLEDPRDPRHVLVMKGAPERVLERCSSILIKGQELPLDEQWREAFQTAYLSLGGLGERVLGFCQLYLSEKDYPPGYAFDVEAMNFPTSGLCFAGLVSMIDPPRATVPDAVLKCRTAGIRVIMVTGDHPITAKAIAASVGIISEGSETVEDIAARLRVPVDQVNRKDARACVINGMQLKDMDPSELVEALRTHPEMVFARTSPQQKLVIVESCQRLGAIVAVTGDGVNDSPALKKADIGVAMGIAGSDAAKNAADMILLDDNFASIVTGVEQGRLIFDNLKKSIAYTLTKNIPELTPYLIYITVSVPLPLGCITILFIELCTDIFPSVSLAYEKAESDIMHLRPRNPKRDRLVNEPLAAYSYFQIGAIQSFAGFTDYFTAMAQEGWFPLLCVGLRPYWENHHLQDLQDSYGQEWTFGQRLYQQYTCYTVFFISIEMCQIADVLIRKTRRLSAFQQGFFRNRILVIAIVFQVCIGCFLCYCPGMPNIFNFMPIRYQWWLVPMPFGLLIFVYDEIRKLGVRCCPGSWWDQELYY.

Over 1–97 (MGKAENYEMY…NALRPPRGTP (97 aa)) the chain is Cytoplasmic. Tyr7 and Tyr10 each carry phosphotyrosine. Residues 14 to 41 (LGPGPGGDMAAKMSKKKAGKGGGKKKEK) are disordered. Positions 26–39 (MSKKKAGKGGGKKK) are enriched in basic residues. Ser27 carries the phosphoserine modification. The chain crosses the membrane as a helical span at residues 98 to 118 (EYVKFARQLAGGLQCLMWVAA). Topologically, residues 119-141 (AICLIAFAIQASEGDLTTDDNLY) are lumenal. A helical membrane pass occupies residues 142 to 162 (LALALIAVVVVTGCFGYYQEF). The Cytoplasmic portion of the chain corresponds to 163 to 298 (KSTNIIASFK…NEKTPIAIEI (136 aa)). Positions 225-239 (NSSLTGESEPQTRSP) are enriched in polar residues. Positions 225 to 245 (NSSLTGESEPQTRSPECTHES) are disordered. The chain crosses the membrane as a helical span at residues 299–318 (EHFVDIIAGLAILFGATFFV). At 319-330 (VAMCIGYTFLRA) the chain is on the lumenal side. The chain crosses the membrane as a helical span at residues 331–348 (MVFFMAIVVAYVPEGLLA). The K(+) site is built by Val339, Ala340, Val342, and Glu344. Topologically, residues 349–782 (TVTVCLSLTA…EQGRLIFDNL (434 aa)) are cytoplasmic. Asp386 serves as the catalytic 4-aspartylphosphate intermediate. The Mg(2+) site is built by Asp386 and Thr388. Phosphoserine is present on residues Ser462 and Ser600. Positions 727 and 731 each coordinate Mg(2+). Residues 783–802 (KKSIAYTLTKNIPELTPYLI) form a helical membrane-spanning segment. Glu796 is a binding site for K(+). Residues 803-812 (YITVSVPLPL) are Lumenal-facing. The chain crosses the membrane as a helical span at residues 813–833 (GCITILFIELCTDIFPSVSLA). Glu821 serves as a coordination point for K(+). Over 834–853 (YEKAESDIMHLRPRNPKRDR) the chain is Cytoplasmic. Phosphoserine is present on Ser839. A helical transmembrane segment spans residues 854–876 (LVNEPLAAYSYFQIGAIQSFAGF). Residues 877-928 (TDYFTAMAQEGWFPLLCVGLRPYWENHHLQDLQDSYGQEWTFGQRLYQQYTC) are Lumenal-facing. The helical transmembrane segment at 929 to 948 (YTVFFISIEMCQIADVLIRK) threads the bilayer. The Cytoplasmic segment spans residues 949 to 962 (TRRLSAFQQGFFRN). The residue at position 953 (Ser953) is a Phosphoserine; by PKA. A helical membrane pass occupies residues 963–981 (RILVIAIVFQVCIGCFLCY). The Lumenal segment spans residues 982–996 (CPGMPNIFNFMPIRY). Residues 997–1017 (QWWLVPMPFGLLIFVYDEIRK) form a helical membrane-spanning segment. Over 1018–1034 (LGVRCCPGSWWDQELYY) the chain is Cytoplasmic.

The protein belongs to the cation transport ATPase (P-type) (TC 3.A.3) family. Type IIC subfamily. As to quaternary structure, the gastric H(+)/K(+) ATPase pump is composed of the catalytic alpha subunit ATP4A and the regulatory beta subunit ATP4B. Interacts (via the P-domain) with ATP4B (via N-terminus); this interaction stabilizes the lumenal-open E2 conformation state and prevents the reverse reaction of the transport cycle.

Its subcellular location is the apical cell membrane. The enzyme catalyses K(+)(out) + ATP + H2O + H(+)(in) = K(+)(in) + ADP + phosphate + 2 H(+)(out). Functionally, the catalytic subunit of the gastric H(+)/K(+) ATPase pump which transports H(+) ions in exchange for K(+) ions across the apical membrane of parietal cells. Uses ATP as an energy source to pump H(+) ions to the gastric lumen while transporting K(+) ion from the lumen into the cell. Remarkably generates a million-fold proton gradient across the gastric parietal cell membrane, acidifying the gastric juice down to pH 1. Within a transport cycle, the transfer of a H(+) ion across the membrane is coupled to ATP hydrolysis and is associated with a transient phosphorylation that shifts the pump conformation from inward-facing (E1) to outward-facing state (E2). The release of the H(+) ion in the stomach lumen is followed by binding of K(+) ion converting the pump conformation back to the E1 state. The chain is Potassium-transporting ATPase alpha chain 1 (ATP4A) from Canis lupus familiaris (Dog).